A 587-amino-acid chain; its full sequence is A-type ATP synthase subunit A (587 aa).

ATP is bound at residue 234–241 (GPFGSGKT).

This sequence belongs to the ATPase alpha/beta chains family. In terms of assembly, the N-terminus (approximately residues 106-122) interacts with subunit H. Has multiple subunits with at least A(3), B(3), C, D, E(1 or 2), F, H(2), I and proteolipid K(x).

The protein resides in the cell membrane. It carries out the reaction ATP + H2O + 4 H(+)(in) = ADP + phosphate + 5 H(+)(out). With respect to regulation, ATP hydrolysis is inhibited by N',N'-dicyclohexylcarbodiimide. Component of the A-type ATP synthase that produces ATP from ADP in the presence of a proton gradient across the membrane. The A chain is the catalytic subunit. Hydrolyzes ATP, GTP (86% of ATPase rate) and UTP (54% of ATPase rate), has very poor activity on CTP. In Methanocaldococcus jannaschii (strain ATCC 43067 / DSM 2661 / JAL-1 / JCM 10045 / NBRC 100440) (Methanococcus jannaschii), this protein is A-type ATP synthase subunit A.